The chain runs to 369 residues: Queuine tRNA-ribosyltransferase (369 aa).

Asp89 serves as the catalytic Proton acceptor. Residues 89–93 (DSGGF), Asp143, Gln187, and Gly214 contribute to the substrate site. The tract at residues 245–251 (GVGTPED) is RNA binding. The active-site Nucleophile is the Asp264. An RNA binding; important for wobble base 34 recognition region spans residues 269 to 273 (TRNAR). Residues Cys302, Cys304, Cys307, and His333 each coordinate Zn(2+).

It belongs to the queuine tRNA-ribosyltransferase family. Homodimer. Within each dimer, one monomer is responsible for RNA recognition and catalysis, while the other monomer binds to the replacement base PreQ1. Zn(2+) is required as a cofactor.

It carries out the reaction 7-aminomethyl-7-carbaguanine + guanosine(34) in tRNA = 7-aminomethyl-7-carbaguanosine(34) in tRNA + guanine. It functions in the pathway tRNA modification; tRNA-queuosine biosynthesis. Functionally, catalyzes the base-exchange of a guanine (G) residue with the queuine precursor 7-aminomethyl-7-deazaguanine (PreQ1) at position 34 (anticodon wobble position) in tRNAs with GU(N) anticodons (tRNA-Asp, -Asn, -His and -Tyr). Catalysis occurs through a double-displacement mechanism. The nucleophile active site attacks the C1' of nucleotide 34 to detach the guanine base from the RNA, forming a covalent enzyme-RNA intermediate. The proton acceptor active site deprotonates the incoming PreQ1, allowing a nucleophilic attack on the C1' of the ribose to form the product. After dissociation, two additional enzymatic reactions on the tRNA convert PreQ1 to queuine (Q), resulting in the hypermodified nucleoside queuosine (7-(((4,5-cis-dihydroxy-2-cyclopenten-1-yl)amino)methyl)-7-deazaguanosine). The protein is Queuine tRNA-ribosyltransferase of Dechloromonas aromatica (strain RCB).